Consider the following 313-residue polypeptide: Formimidoylglutamase (313 aa).

Residues His130, Asp155, His157, Asp159, Asp241, and Asp243 each contribute to the Mn(2+) site.

It belongs to the arginase family. Mn(2+) serves as cofactor.

The enzyme catalyses N-formimidoyl-L-glutamate + H2O = formamide + L-glutamate. It functions in the pathway amino-acid degradation; L-histidine degradation into L-glutamate; L-glutamate from N-formimidoyl-L-glutamate (hydrolase route): step 1/1. Its function is as follows. Catalyzes the conversion of N-formimidoyl-L-glutamate to L-glutamate and formamide. The polypeptide is Formimidoylglutamase (Salmonella schwarzengrund (strain CVM19633)).